The primary structure comprises 525 residues: NAD(P)H-quinone oxidoreductase chain 4-2 (525 aa).

14 consecutive transmembrane segments (helical) span residues 6-26 (FPWL…IPII), 36-56 (WYAL…FYTS), 91-111 (LIIL…PVTL), 115-135 (LFYF…AVQD), 137-157 (LLFF…LAIW), 169-189 (FILY…TMAF), 212-232 (LLLY…IPLH), 243-263 (TAPA…YALI), 277-297 (FAPV…LTSF), 314-334 (MGFV…GAVL), 335-355 (QMVS…ATYD), 375-397 (IFAM…GFVA), 417-437 (VIVV…LLSM), and 464-484 (VFVI…PKLL).

It belongs to the complex I subunit 4 family.

It localises to the cellular thylakoid membrane. It catalyses the reaction a plastoquinone + NADH + (n+1) H(+)(in) = a plastoquinol + NAD(+) + n H(+)(out). It carries out the reaction a plastoquinone + NADPH + (n+1) H(+)(in) = a plastoquinol + NADP(+) + n H(+)(out). Its function is as follows. NDH-1 shuttles electrons from NAD(P)H, via FMN and iron-sulfur (Fe-S) centers, to quinones in the respiratory chain. The immediate electron acceptor for the enzyme in this species is believed to be plastoquinone. Couples the redox reaction to proton translocation (for every two electrons transferred, four hydrogen ions are translocated across the cytoplasmic membrane), and thus conserves the redox energy in a proton gradient. The polypeptide is NAD(P)H-quinone oxidoreductase chain 4-2 (ndhD2) (Nostoc sp. (strain PCC 7120 / SAG 25.82 / UTEX 2576)).